The sequence spans 274 residues: Large ribosomal subunit protein uL2 (274 aa).

2 disordered regions span residues 34–53 and 216–274; these read IAPI…TMRY and RRPR…RRKK.

The protein belongs to the universal ribosomal protein uL2 family. As to quaternary structure, part of the 50S ribosomal subunit. Forms a bridge to the 30S subunit in the 70S ribosome.

In terms of biological role, one of the primary rRNA binding proteins. Required for association of the 30S and 50S subunits to form the 70S ribosome, for tRNA binding and peptide bond formation. It has been suggested to have peptidyltransferase activity; this is somewhat controversial. Makes several contacts with the 16S rRNA in the 70S ribosome. The chain is Large ribosomal subunit protein uL2 from Flavobacterium psychrophilum (strain ATCC 49511 / DSM 21280 / CIP 103535 / JIP02/86).